The primary structure comprises 228 residues: MAAPATRSRYLLRLTVTLGPRSRSYHAPPPPRRRPAPHWPDRENLMTPRWQLTPRYAAKQFGRHGAISGVPPASLWPSSEQLCELEAEEREWYPSLATMQESLRVQQQAAEARRQAREQHIAECMAKMPQMIENWRKQKRERWEKIQADKERRARLQAEAQEQLGYHVDPRSARFQELLQDLDKQQRKRLKEERQRQKKEARIAAMASAEGQDSAEAQDSAASGKPSS.

Disordered stretches follow at residues 20-44 (PRSRSYHAPPPPRRRPAPHWPDREN) and 186-228 (QRKR…KPSS). Positions 98–207 (TMQESLRVQQ…KKEARIAAMA (110 aa)) form a coiled coil. Residues 184–200 (KQQRKRLKEERQRQKKE) carry the Nuclear localization signal motif. The segment covering 186–202 (QRKRLKEERQRQKKEAR) has biased composition (basic and acidic residues). Residues 212-228 (QDSAEAQDSAASGKPSS) are compositionally biased toward low complexity.

It belongs to the mitochondrion-specific ribosomal protein mL64 family. In terms of assembly, component of the mitochondrial ribosome large subunit (39S) which comprises a 16S rRNA and about 50 distinct proteins. Interacts with GADD45A, GADD45B and GADD45G. Interacts with NR4A1 via the NR4A1 AB domain. Interacts with ATAD3A and ATAD3B.

The protein resides in the mitochondrion. The protein localises to the nucleus. Acts as a negative regulator of G1 to S cell cycle phase progression by inhibiting cyclin-dependent kinases. Inhibitory effects are additive with GADD45 proteins but also occur in the absence of GADD45 proteins. Acts as a repressor of the orphan nuclear receptor NR4A1 by inhibiting AB domain-mediated transcriptional activity. May be involved in the hormone-mediated regulation of NR4A1 transcriptional activity. May play a role in mitochondrial protein synthesis. The sequence is that of Large ribosomal subunit protein mL64 (Gadd45gip1) from Rattus norvegicus (Rat).